A 728-amino-acid polypeptide reads, in one-letter code: Catalase-peroxidase 2 (728 aa).

The disordered stretch occupies residues 1-20 (MSNEGKCPFNHGKRNGTTNR). Positions 91–214 (WHSAGTYRTG…LAAVQMGLIY (124 aa)) form a cross-link, tryptophyl-tyrosyl-methioninium (Trp-Tyr) (with M-240). The Proton acceptor role is filled by His-92. Residues 214-240 (YVNPEGPNGNPDPLASARDIRETFARM) constitute a cross-link (tryptophyl-tyrosyl-methioninium (Tyr-Met) (with W-91)). His-255 contacts heme b. A disordered region spans residues 335–355 (AHQWQPKGGAGADSVPDPFEP).

It belongs to the peroxidase family. Peroxidase/catalase subfamily. Homodimer or homotetramer. It depends on heme b as a cofactor. Post-translationally, formation of the three residue Trp-Tyr-Met cross-link is important for the catalase, but not the peroxidase activity of the enzyme.

The enzyme catalyses H2O2 + AH2 = A + 2 H2O. It carries out the reaction 2 H2O2 = O2 + 2 H2O. Functionally, bifunctional enzyme with both catalase and broad-spectrum peroxidase activity. In Burkholderia cenocepacia (strain HI2424), this protein is Catalase-peroxidase 2.